The following is a 169-amino-acid chain: Disulfide bond formation protein B 1 (169 aa).

At 1–14 (MSDNTLYLRREKRF) the chain is on the cytoplasmic side. The chain crosses the membrane as a helical span at residues 15-31 (LVLLGIICLALIGGALY). Residues 32-49 (MQVVLDEAPCPLCILQRY) are Periplasmic-facing. An intrachain disulfide couples C41 to C44. A helical transmembrane segment spans residues 50–65 (ALLFIAIFAFIGAAMP). The Cytoplasmic portion of the chain corresponds to 66 to 72 (GRRSVTA). Residues 73–89 (FETLVTLSALGGIAAAG) traverse the membrane as a helical segment. The Periplasmic segment spans residues 90-144 (RHVWILAHPSDSCGIDVLQPIVDGLPLATLFPTGFQVSGFCTTPYPPVLGLSLAQ). A disulfide bridge connects residues C102 and C130. Residues 145–163 (WALTAFVLTAVLVPACIIR) form a helical membrane-spanning segment. Topologically, residues 164 to 169 (NRRKPY) are cytoplasmic.

The protein belongs to the DsbB family.

The protein resides in the cell inner membrane. Functionally, required for disulfide bond formation in some periplasmic proteins. Acts by oxidizing the DsbA protein. This chain is Disulfide bond formation protein B 1, found in Pseudomonas syringae pv. syringae (strain B728a).